Here is a 407-residue protein sequence, read N- to C-terminus: Imidazolonepropionase (407 aa).

The Fe(3+) site is built by H74 and H76. Positions 74 and 76 each coordinate Zn(2+). Residues R83, Y146, and H179 each contribute to the 4-imidazolone-5-propanoate site. Y146 lines the N-formimidoyl-L-glutamate pocket. H244 serves as a coordination point for Fe(3+). H244 serves as a coordination point for Zn(2+). Q247 contacts 4-imidazolone-5-propanoate. Position 319 (D319) interacts with Fe(3+). Residue D319 participates in Zn(2+) binding. 2 residues coordinate N-formimidoyl-L-glutamate: N321 and G323. Residue T324 coordinates 4-imidazolone-5-propanoate.

This sequence belongs to the metallo-dependent hydrolases superfamily. HutI family. It depends on Zn(2+) as a cofactor. The cofactor is Fe(3+).

Its subcellular location is the cytoplasm. The catalysed reaction is 4-imidazolone-5-propanoate + H2O = N-formimidoyl-L-glutamate. The protein operates within amino-acid degradation; L-histidine degradation into L-glutamate; N-formimidoyl-L-glutamate from L-histidine: step 3/3. In terms of biological role, catalyzes the hydrolytic cleavage of the carbon-nitrogen bond in imidazolone-5-propanoate to yield N-formimidoyl-L-glutamate. It is the third step in the universal histidine degradation pathway. The polypeptide is Imidazolonepropionase (Salmonella typhi).